A 76-amino-acid chain; its full sequence is Translational regulator CsrA (76 aa).

Belongs to the CsrA/RsmA family. Homodimer; the beta-strands of each monomer intercalate to form a hydrophobic core, while the alpha-helices form wings that extend away from the core.

It localises to the cytoplasm. In terms of biological role, a translational regulator that binds mRNA to regulate translation initiation and/or mRNA stability. Usually binds in the 5'-UTR at or near the Shine-Dalgarno sequence preventing ribosome-binding, thus repressing translation. Its main target seems to be the major flagellin gene, while its function is anatagonized by FliW. This Wolinella succinogenes (strain ATCC 29543 / DSM 1740 / CCUG 13145 / JCM 31913 / LMG 7466 / NCTC 11488 / FDC 602W) (Vibrio succinogenes) protein is Translational regulator CsrA.